The chain runs to 72 residues: Translation initiation factor IF-1 (72 aa).

Residues 1-72 (MAKEDTLEFP…TKGRINYRFK (72 aa)) form the S1-like domain.

It belongs to the IF-1 family. In terms of assembly, component of the 30S ribosomal translation pre-initiation complex which assembles on the 30S ribosome in the order IF-2 and IF-3, IF-1 and N-formylmethionyl-tRNA(fMet); mRNA recruitment can occur at any time during PIC assembly.

The protein resides in the cytoplasm. Its function is as follows. One of the essential components for the initiation of protein synthesis. Stabilizes the binding of IF-2 and IF-3 on the 30S subunit to which N-formylmethionyl-tRNA(fMet) subsequently binds. Helps modulate mRNA selection, yielding the 30S pre-initiation complex (PIC). Upon addition of the 50S ribosomal subunit IF-1, IF-2 and IF-3 are released leaving the mature 70S translation initiation complex. This Roseobacter denitrificans (strain ATCC 33942 / OCh 114) (Erythrobacter sp. (strain OCh 114)) protein is Translation initiation factor IF-1.